Consider the following 338-residue polypeptide: MTRF1L release factor glutamine methyltransferase (338 aa).

Residues 167-171 (GCGSG), Asp190, Trp225, and Asn239 contribute to the S-adenosyl-L-methionine site. 239–242 (NPPY) is a binding site for substrate.

This sequence belongs to the protein N5-glutamine methyltransferase family.

Its subcellular location is the mitochondrion. It catalyses the reaction L-glutaminyl-[peptide chain release factor] + S-adenosyl-L-methionine = N(5)-methyl-L-glutaminyl-[peptide chain release factor] + S-adenosyl-L-homocysteine + H(+). N5-glutamine methyltransferase responsible for the methylation of the glutamine residue in the universally conserved GGQ motif of the mitochondrial translation release factors MTRF1, MTRF1L, MRPL58/ICT1 and MTRFR. The chain is MTRF1L release factor glutamine methyltransferase (HEMK1) from Homo sapiens (Human).